The following is a 107-amino-acid chain: Acidic phospholipase A2 2 (107 aa).

Disulfide bonds link Cys-26-Cys-100, Cys-28-Cys-38, Cys-37-Cys-82, Cys-43-Cys-107, Cys-44-Cys-75, and Cys-62-Cys-73. Residues Tyr-27, Gly-29, and Gly-31 each coordinate Ca(2+). His-41 is a catalytic residue. Residue Asp-42 participates in Ca(2+) binding. Asp-76 is a catalytic residue.

Ca(2+) is required as a cofactor. In terms of tissue distribution, expressed by the venom gland.

It is found in the secreted. It carries out the reaction a 1,2-diacyl-sn-glycero-3-phosphocholine + H2O = a 1-acyl-sn-glycero-3-phosphocholine + a fatty acid + H(+). In terms of biological role, PLA2 catalyzes the calcium-dependent hydrolysis of the 2-acyl groups in 3-sn-phosphoglycerides. The sequence is that of Acidic phospholipase A2 2 from Bothrops insularis (Golden lancehead).